A 151-amino-acid chain; its full sequence is Protein SprT-like (151 aa).

The SprT-like domain maps to 7-147 (QKLTESISES…GKCKGKLHLH (141 aa)). Histidine 67 is a Zn(2+) binding site. Glutamate 68 is an active-site residue. Residue histidine 71 coordinates Zn(2+).

Belongs to the SprT family. It depends on Zn(2+) as a cofactor.

The protein localises to the cytoplasm. The protein is Protein SprT-like of Staphylococcus carnosus (strain TM300).